Consider the following 380-residue polypeptide: Mitogen-activated protein kinase 3 (380 aa).

An N-acetylalanine modification is found at Ala-2. Positions Tyr-43–Leu-331 constitute a Protein kinase domain. Residues Ile-49 to Val-57 and Lys-72 each bind ATP. Asp-167 serves as the catalytic Proton acceptor. Thr-199 carries the post-translational modification Phosphothreonine. A Phosphothreonine; by MAP2K1 and MAP2K2 modification is found at Thr-203. The short motif at Thr-203–Tyr-205 is the TXY element. The residue at position 205 (Tyr-205) is a Phosphotyrosine; by MAP2K1 and MAP2K2. At Thr-208 the chain carries Phosphothreonine; by autocatalysis.

Belongs to the protein kinase superfamily. CMGC Ser/Thr protein kinase family. MAP kinase subfamily. In terms of assembly, binds both upstream activators and downstream substrates in multimolecular complexes. Found in a complex with at least BRAF, HRAS, MAP2K1/MEK1, MAPK3 and RGS14. Interacts with ADAM15, ARRB2, CANX, DAPK1 (via death domain), HSF4, IER3, MAP2K1/MEK1, MORG1, NISCH, PEA15, SGK1 and MKNK2. MKNK2 isoform 1 binding prevents from dephosphorylation and inactivation. Interacts with TPR. Interacts with HSF1 (via D domain and preferentially with hyperphosphorylated form); this interaction occurs upon heat shock. Interacts with CDKN2AIP. Interacts with CAVIN4. Interacts with GIT1; this interaction is necessary for MAPK3 localization to focal adhesions. Interacts with ZNF263. Interacts with EBF4. Mg(2+) serves as cofactor. In terms of processing, phosphorylated upon FLT3 and KIT signaling. Ligand-activated ALK induces tyrosine phosphorylation. Dephosphorylated by PTPRJ at Tyr-205. Dually phosphorylated on Thr-203 and Tyr-205, which activates the enzyme. Ubiquitinated by TRIM15 via 'Lys-63'-linked ubiquitination; leading to activation. Deubiquitinated by CYLD. As to expression, highest levels within the nervous system, expressed in different tissues, mostly in intestine, placenta and lung.

The protein resides in the cytoplasm. It is found in the nucleus. It localises to the membrane. The protein localises to the caveola. Its subcellular location is the cell junction. The protein resides in the focal adhesion. The catalysed reaction is L-seryl-[protein] + ATP = O-phospho-L-seryl-[protein] + ADP + H(+). It catalyses the reaction L-threonyl-[protein] + ATP = O-phospho-L-threonyl-[protein] + ADP + H(+). Phosphorylated by MAP2K1/MEK1 and MAP2K2/MEK2 on Thr-203 and Tyr-205 in response to external stimuli like insulin or NGF. Both phosphorylations are required for activity. This phosphorylation causes dramatic conformational changes, which enable full activation and interaction of MAPK1/ERK2 with its substrates. Dephosphorylated and inactivated by DUSP3, DUSP6 and DUSP9. Serine/threonine kinase which acts as an essential component of the MAP kinase signal transduction pathway. MAPK1/ERK2 and MAPK3/ERK1 are the 2 MAPKs which play an important role in the MAPK/ERK cascade. They participate also in a signaling cascade initiated by activated KIT and KITLG/SCF. Depending on the cellular context, the MAPK/ERK cascade mediates diverse biological functions such as cell growth, adhesion, survival and differentiation through the regulation of transcription, translation, cytoskeletal rearrangements. The MAPK/ERK cascade also plays a role in initiation and regulation of meiosis, mitosis, and postmitotic functions in differentiated cells by phosphorylating a number of transcription factors. About 160 substrates have already been discovered for ERKs. Many of these substrates are localized in the nucleus, and seem to participate in the regulation of transcription upon stimulation. However, other substrates are found in the cytosol as well as in other cellular organelles, and those are responsible for processes such as translation, mitosis and apoptosis. Moreover, the MAPK/ERK cascade is also involved in the regulation of the endosomal dynamics, including lysosome processing and endosome cycling through the perinuclear recycling compartment (PNRC); as well as in the fragmentation of the Golgi apparatus during mitosis. The substrates include transcription factors (such as ATF2, BCL6, ELK1, ERF, FOS, HSF4 or SPZ1), cytoskeletal elements (such as CANX, CTTN, GJA1, MAP2, MAPT, PXN, SORBS3 or STMN1), regulators of apoptosis (such as BAD, BTG2, CASP9, DAPK1, IER3, MCL1 or PPARG), regulators of translation (such as EIF4EBP1) and a variety of other signaling-related molecules (like ARHGEF2, DEPTOR, FRS2 or GRB10). Protein kinases (such as RAF1, RPS6KA1/RSK1, RPS6KA3/RSK2, RPS6KA2/RSK3, RPS6KA6/RSK4, SYK, MKNK1/MNK1, MKNK2/MNK2, RPS6KA5/MSK1, RPS6KA4/MSK2, MAPKAPK3 or MAPKAPK5) and phosphatases (such as DUSP1, DUSP4, DUSP6 or DUSP16) are other substrates which enable the propagation the MAPK/ERK signal to additional cytosolic and nuclear targets, thereby extending the specificity of the cascade. The protein is Mitogen-activated protein kinase 3 (Mapk3) of Rattus norvegicus (Rat).